Consider the following 217-residue polypeptide: Non-structural protein NS3 (217 aa).

This sequence belongs to the orbivirus NS3 family.

Functionally, may play a role in the release of virions from infected cells. This African horse sickness virus (AHSV) protein is Non-structural protein NS3 (Segment-10).